The chain runs to 317 residues: Sulfate adenylyltransferase subunit 2 (317 aa).

Disordered regions lie at residues 1 to 21 (MPDSRPDTELSNPQSAKAPLD) and 298 to 317 (RAIDRDQSGSMEKKKREGYF).

The protein belongs to the PAPS reductase family. CysD subfamily. In terms of assembly, heterodimer composed of CysD, the smaller subunit, and CysN.

It catalyses the reaction sulfate + ATP + H(+) = adenosine 5'-phosphosulfate + diphosphate. It functions in the pathway sulfur metabolism; hydrogen sulfide biosynthesis; sulfite from sulfate: step 1/3. With CysN forms the ATP sulfurylase (ATPS) that catalyzes the adenylation of sulfate producing adenosine 5'-phosphosulfate (APS) and diphosphate, the first enzymatic step in sulfur assimilation pathway. APS synthesis involves the formation of a high-energy phosphoric-sulfuric acid anhydride bond driven by GTP hydrolysis by CysN coupled to ATP hydrolysis by CysD. The sequence is that of Sulfate adenylyltransferase subunit 2 from Rhizobium etli (strain ATCC 51251 / DSM 11541 / JCM 21823 / NBRC 15573 / CFN 42).